The chain runs to 357 residues: Iron deficiency-induced protein A (357 aa).

Residues 1–36 (MSESMFSRRDFLLGGTALAGTLLLDSFGDWRRRAEA) constitute a signal peptide (tat-type signal). Residues histidine 48, tyrosine 49, tyrosine 182, tyrosine 238, and tyrosine 239 each coordinate Fe cation.

The protein belongs to the bacterial solute-binding protein 1 family. Predicted to be exported by the Tat system. The position of the signal peptide cleavage has not been experimentally proven.

The protein localises to the cellular thylakoid membrane. Plays an important role in protecting the acceptor side of photosystem II (PSII) against oxidative damage, especially under iron-limiting growth conditions. In terms of biological role, may also be part of a periplasmic ABC transporter complex involved in iron import. In Synechococcus elongatus (strain ATCC 33912 / PCC 7942 / FACHB-805) (Anacystis nidulans R2), this protein is Iron deficiency-induced protein A (idiA).